A 380-amino-acid chain; its full sequence is Cytochrome b (380 aa).

4 helical membrane-spanning segments follow: residues 34–54 (FGSL…LLAM), 78–99 (WLIR…YLHI), 114–134 (WNTG…GYVL), and 179–199 (FFAL…IHLT). Heme b-binding residues include H84 and H98. The heme b site is built by H183 and H197. Position 202 (H202) interacts with a ubiquinone. 4 helical membrane-spanning segments follow: residues 227-247 (LKDI…ALFS), 289-309 (LGGV…PLLH), 321-341 (LSQL…WIGS), and 348-368 (FIII…VLFP).

The protein belongs to the cytochrome b family. The cytochrome bc1 complex contains 11 subunits: 3 respiratory subunits (MT-CYB, CYC1 and UQCRFS1), 2 core proteins (UQCRC1 and UQCRC2) and 6 low-molecular weight proteins (UQCRH/QCR6, UQCRB/QCR7, UQCRQ/QCR8, UQCR10/QCR9, UQCR11/QCR10 and a cleavage product of UQCRFS1). This cytochrome bc1 complex then forms a dimer. The cofactor is heme b.

It localises to the mitochondrion inner membrane. Component of the ubiquinol-cytochrome c reductase complex (complex III or cytochrome b-c1 complex) that is part of the mitochondrial respiratory chain. The b-c1 complex mediates electron transfer from ubiquinol to cytochrome c. Contributes to the generation of a proton gradient across the mitochondrial membrane that is then used for ATP synthesis. This Oceanodroma melania (Black storm-petrel) protein is Cytochrome b (MT-CYB).